A 160-amino-acid polypeptide reads, in one-letter code: Oocyte-secreted protein 4B (160 aa).

Positions 1 to 13 (MKTSVLLAITAMC) are cleaved as a signal peptide.

The protein belongs to the PLAC1 family.

The protein resides in the secreted. This is Oocyte-secreted protein 4B from Homo sapiens (Human).